The following is a 545-amino-acid chain: Carboxypeptidase Y homolog A (545 aa).

Positions 1 to 17 (MKSLALALLVGGAIAAG) are cleaved as a signal peptide. Positions 18 to 123 (PQQQVLQAPV…KLEAYDLRVK (106 aa)) are excised as a propeptide. 5 disulfide bridges follow: cysteine 177–cysteine 416, cysteine 311–cysteine 325, cysteine 335–cysteine 358, cysteine 342–cysteine 351, and cysteine 380–cysteine 386. The N-linked (GlcNAc...) asparagine glycan is linked to asparagine 208. The active site involves serine 264. The active site involves aspartate 455. Asparagine 485, asparagine 491, and asparagine 506 each carry an N-linked (GlcNAc...) asparagine glycan. Histidine 517 is an active-site residue.

The protein belongs to the peptidase S10 family.

It is found in the vacuole. The catalysed reaction is Release of a C-terminal amino acid with broad specificity.. In terms of biological role, vacuolar carboxypeptidase involved in degradation of small peptides. Digests preferentially peptides containing an aliphatic or hydrophobic residue in P1' position, as well as methionine, leucine or phenylalanine in P1 position of ester substrate. The protein is Carboxypeptidase Y homolog A (CPYA) of Ajellomyces dermatitidis (strain ER-3 / ATCC MYA-2586) (Blastomyces dermatitidis).